A 356-amino-acid polypeptide reads, in one-letter code: Alanine racemase (356 aa).

Lysine 35 (proton acceptor; specific for D-alanine) is an active-site residue. At lysine 35 the chain carries N6-(pyridoxal phosphate)lysine. Arginine 130 contacts substrate. Tyrosine 253 acts as the Proton acceptor; specific for L-alanine in catalysis. Methionine 301 contacts substrate.

This sequence belongs to the alanine racemase family. Pyridoxal 5'-phosphate serves as cofactor.

It catalyses the reaction L-alanine = D-alanine. It participates in amino-acid biosynthesis; D-alanine biosynthesis; D-alanine from L-alanine: step 1/1. In terms of biological role, catalyzes the interconversion of L-alanine and D-alanine. May also act on other amino acids. The protein is Alanine racemase (alr) of Burkholderia mallei (strain NCTC 10229).